A 237-amino-acid chain; its full sequence is Ribonuclease PH (237 aa).

Phosphate is bound by residues Arg86 and Gly124 to Arg126.

The protein belongs to the RNase PH family. Homohexameric ring arranged as a trimer of dimers.

The catalysed reaction is tRNA(n+1) + phosphate = tRNA(n) + a ribonucleoside 5'-diphosphate. Functionally, phosphorolytic 3'-5' exoribonuclease that plays an important role in tRNA 3'-end maturation. Removes nucleotide residues following the 3'-CCA terminus of tRNAs; can also add nucleotides to the ends of RNA molecules by using nucleoside diphosphates as substrates, but this may not be physiologically important. Probably plays a role in initiation of 16S rRNA degradation (leading to ribosome degradation) during starvation. The sequence is that of Ribonuclease PH from Shewanella loihica (strain ATCC BAA-1088 / PV-4).